Reading from the N-terminus, the 453-residue chain is Choline kinase alpha (453 aa).

The tract at residues 22-81 (CGGSAAPTPGVGQQRDAAGELESKQLGGRSQPLALPPPPPPPLPLPPPPSPPLADEQPEP) is disordered. Positions 55–73 (ALPPPPPPPLPLPPPPSPP) are enriched in pro residues. Phosphoserine is present on Ser-71. Residues 113-119 (RGGLSNM), Arg-142, and 203-209 (QFIPSRR) each bind ATP. 115-117 (GLS) provides a ligand contact to phosphocholine. Lys-243 is modified (N6-acetyllysine). Ser-275 bears the Phosphoserine mark. ATP is bound by residues Gln-304 and Asp-326.

The protein belongs to the choline/ethanolamine kinase family. As to quaternary structure, heterodimer with CHKB. Homodimer. Monomer; acetylation by KAT5 promotes dissociation of the homodimer and monomerization. Post-translationally, phosphorylated at Ser-275 by AMPK in response to glucose deprivation, leading to localization to lipid droplets. In terms of processing, acetylated by KAT5 at Lys-243 following phosphorylation by AMPK, leading to monomerization and conversion into a tyrosine-protein kinase. As to expression, testis, brain, lung, kidney and liver.

It is found in the cytoplasm. Its subcellular location is the cytosol. The protein localises to the lipid droplet. The enzyme catalyses choline + ATP = phosphocholine + ADP + H(+). It catalyses the reaction ethanolamine + ATP = phosphoethanolamine + ADP + H(+). It carries out the reaction L-tyrosyl-[protein] + ATP = O-phospho-L-tyrosyl-[protein] + ADP + H(+). It functions in the pathway phospholipid metabolism; phosphatidylcholine biosynthesis; phosphocholine from choline: step 1/1. It participates in phospholipid metabolism; phosphatidylethanolamine biosynthesis; phosphatidylethanolamine from ethanolamine: step 1/3. Functionally, plays a key role in phospholipid biosynthesis by catalyzing the phosphorylation of free choline to phosphocholine, the first step in phosphatidylcholine biosynthesis. Also phosphorylates ethanolamine, thereby contributing to phosphatidylethanolamine biosynthesis. Has higher activity with choline. In terms of biological role, this isoform plays a key role in lipolysis of lipid droplets following glucose deprivation. In response to glucose deprivation, phosphorylated by AMPK, promoting localization to lipid droplets. Phosphorylation is followed by acetylation by KAT5, leading to dissociation of the homodimer into a monomer. Monomeric CHKA isoform 1 is converted into a tyrosine-protein kinase, which phosphorylates lipid droplet structural proteins PLIN2 and PLIN3, leading to lipolysis of lipid droplets. This chain is Choline kinase alpha (Chka), found in Rattus norvegicus (Rat).